The chain runs to 960 residues: Pentatricopeptide repeat-containing protein At3g63370, chloroplastic (960 aa).

The transit peptide at 1–64 (MEYAVTNMRL…PKLACFDGVL (64 aa)) directs the protein to the chloroplast. 20 PPR repeats span residues 79-109 (PVEAFAYVLELCGKRRAVSQGRQLHSRIFKT), 115-145 (LDFLAGKLVFMYGKCGSLDDAEKVFDEMPDR), 146-180 (TAFAWNTMIGAYVSNGEPASALALYWNMRVEGVPL), 181-215 (GLSSFPALLKACAKLRDIRSGSELHSLLVKLGYHS), 216-246 (TGFIVNALVSMYAKNDDLSAARRLFDGFQEK), 248-282 (DAVLWNSILSSYSTSGKSLETLELFREMHMTGPAP), 283-317 (NSYTIVSALTACDGFSYAKLGKEIHASVLKSSTHS), 319-349 (ELYVCNALIAMYTRCGKMPQAERILRQMNNA), 350-384 (DVVTWNSLIKGYVQNLMYKEALEFFSDMIAAGHKS), 385-419 (DEVSMTSIIAASGRLSNLLAGMELHAYVIKHGWDS), 420-450 (NLQVGNTLIDMYSKCNLTCYMGRAFLRMHDK), 451-485 (DLISWTTVIAGYAQNDCHVEALELFRDVAKKRMEI), 486-516 (DEMILGSILRASSVLKSMLIVKEIHCHILRK), 520-550 (DTVIQNELVDVYGKCRNMGYATRVFESIKGK), 551-585 (DVVSWTSMISSSALNGNESEAVELFRRMVETGLSA), 586-620 (DSVALLCILSAAASLSALNKGREIHCYLLRKGFCL), 621-651 (EGSIAVAVVDMYACCGDLQSAKAVFDRIERK), 652-686 (GLLQYTSMINAYGMHGCGKAAVELFDKMRHENVSP), 687-717 (DHISFLALLYACSHAGLLDEGRGFLKIMEHE), and 723-753 (WPEHYVCLVDMLGRANCVVEAFEFVKMMKTE). The segment at 758-833 (VWCALLAACR…HPGCSWIEMD (76 aa)) is type E motif. Residues 834-864 (GKVHKFTARDKSHPESKEIYEKLSEVTRKLE) form a type E(+) motif region. Residues 865 to 960 (REVGYVADTK…SGLCSCGDSW (96 aa)) are type DYW motif.

It belongs to the PPR family. PCMP-H subfamily.

The protein resides in the plastid. It localises to the chloroplast. Involved in RNA editing event in chloroplasts. Required for the editing of a single site in rps14 transcript. This chain is Pentatricopeptide repeat-containing protein At3g63370, chloroplastic (PCMP-H83), found in Arabidopsis thaliana (Mouse-ear cress).